We begin with the raw amino-acid sequence, 177 residues long: ATP synthase subunit delta (177 aa).

It belongs to the ATPase delta chain family. F-type ATPases have 2 components, F(1) - the catalytic core - and F(0) - the membrane proton channel. F(1) has five subunits: alpha(3), beta(3), gamma(1), delta(1), epsilon(1). F(0) has three main subunits: a(1), b(2) and c(10-14). The alpha and beta chains form an alternating ring which encloses part of the gamma chain. F(1) is attached to F(0) by a central stalk formed by the gamma and epsilon chains, while a peripheral stalk is formed by the delta and b chains.

The protein localises to the cell inner membrane. Functionally, f(1)F(0) ATP synthase produces ATP from ADP in the presence of a proton or sodium gradient. F-type ATPases consist of two structural domains, F(1) containing the extramembraneous catalytic core and F(0) containing the membrane proton channel, linked together by a central stalk and a peripheral stalk. During catalysis, ATP synthesis in the catalytic domain of F(1) is coupled via a rotary mechanism of the central stalk subunits to proton translocation. Its function is as follows. This protein is part of the stalk that links CF(0) to CF(1). It either transmits conformational changes from CF(0) to CF(1) or is implicated in proton conduction. This Klebsiella pneumoniae (strain 342) protein is ATP synthase subunit delta.